The sequence spans 165 residues: Nucleotide-binding protein Ccur92_01650 (165 aa).

The protein belongs to the YajQ family.

Functionally, nucleotide-binding protein. The sequence is that of Nucleotide-binding protein Ccur92_01650 from Campylobacter curvus (strain 525.92).